The sequence spans 279 residues: 3-methyl-2-oxobutanoate hydroxymethyltransferase (279 aa).

2 residues coordinate Mg(2+): aspartate 43 and aspartate 82. 3-methyl-2-oxobutanoate-binding positions include 43–44 (DS), aspartate 82, and lysine 112. Glutamate 114 is a Mg(2+) binding site. Glutamate 181 functions as the Proton acceptor in the catalytic mechanism.

This sequence belongs to the PanB family. In terms of assembly, homodecamer; pentamer of dimers. Mg(2+) is required as a cofactor.

The protein resides in the cytoplasm. The enzyme catalyses 3-methyl-2-oxobutanoate + (6R)-5,10-methylene-5,6,7,8-tetrahydrofolate + H2O = 2-dehydropantoate + (6S)-5,6,7,8-tetrahydrofolate. It functions in the pathway cofactor biosynthesis; (R)-pantothenate biosynthesis; (R)-pantoate from 3-methyl-2-oxobutanoate: step 1/2. In terms of biological role, catalyzes the reversible reaction in which hydroxymethyl group from 5,10-methylenetetrahydrofolate is transferred onto alpha-ketoisovalerate to form ketopantoate. The sequence is that of 3-methyl-2-oxobutanoate hydroxymethyltransferase from Exiguobacterium sibiricum (strain DSM 17290 / CCUG 55495 / CIP 109462 / JCM 13490 / 255-15).